We begin with the raw amino-acid sequence, 332 residues long: ADP-L-glycero-D-manno-heptose-6-epimerase (332 aa).

Residues 11–12, 32–33, K39, K54, 76–80, and N93 each bind NADP(+); these read FI, DN, and EGACS. Y140 functions as the Proton acceptor in the catalytic mechanism. Residue K144 participates in NADP(+) binding. Substrate is bound at residue N170. The NADP(+) site is built by V171 and K179. Residue K179 is the Proton acceptor of the active site. Residues R181, H188, 202–205, R215, and Y294 each bind substrate; that span reads FEGS.

It belongs to the NAD(P)-dependent epimerase/dehydratase family. HldD subfamily. Homopentamer. Requires NADP(+) as cofactor.

It carries out the reaction ADP-D-glycero-beta-D-manno-heptose = ADP-L-glycero-beta-D-manno-heptose. Its pathway is nucleotide-sugar biosynthesis; ADP-L-glycero-beta-D-manno-heptose biosynthesis; ADP-L-glycero-beta-D-manno-heptose from D-glycero-beta-D-manno-heptose 7-phosphate: step 4/4. Catalyzes the interconversion between ADP-D-glycero-beta-D-manno-heptose and ADP-L-glycero-beta-D-manno-heptose via an epimerization at carbon 6 of the heptose. This chain is ADP-L-glycero-D-manno-heptose-6-epimerase, found in Dechloromonas aromatica (strain RCB).